The following is an 84-amino-acid chain: Cell division protein CrgA (84 aa).

The next 2 helical transmembrane spans lie at 31 to 51 (VAPVMLAMFLIGLAWIVVFYV) and 60 to 80 (ALDNWNIVVGFGFIAAGFGVS).

Belongs to the CrgA family.

It localises to the cell membrane. Functionally, involved in cell division. Coordinates growth and cell division. Required for the formation of the sporulation septa. This is Cell division protein CrgA from Streptomyces avermitilis (strain ATCC 31267 / DSM 46492 / JCM 5070 / NBRC 14893 / NCIMB 12804 / NRRL 8165 / MA-4680).